We begin with the raw amino-acid sequence, 290 residues long: L-proline cis-3-hydroxylase 1 (290 aa).

Fe cation is bound by residues His107, Asp109, and His158. Residue Arg168 participates in 2-oxoglutarate binding.

This sequence belongs to the L-proline cis-4-/cis-3-hydroxylase family. Homodimer. Requires Fe(2+) as cofactor.

It carries out the reaction L-proline + 2-oxoglutarate + O2 = cis-3-hydroxy-L-proline + succinate + CO2. Inhibited by metal ions such as Co(2+), Zn(2+), Ni(2+) or Cu(2+). Is also inhibited by EDTA in vitro. Unlike the procollagen-proline cis-3- and trans-4-hydroxylases from mammals, does not necessarily require L-ascorbate for activity although it does increase the activity of the enzyme. Functionally, dioxygenase that catalyzes the 2-oxoglutarate-dependent selective hydroxylation of free L-proline to cis-3-hydroxy-L-proline (cis-3-Hyp). D-proline, trans-4-hydroxy-L-proline, cis-4-hydroxy-L-proline, cis-4-hydroxy-D-proline, and 3,4-dehydro-DL-proline are not substrates. The polypeptide is L-proline cis-3-hydroxylase 1 (Streptomyces sp).